The primary structure comprises 160 residues: Cytochrome b6-f complex subunit 4 (160 aa).

3 consecutive transmembrane segments (helical) span residues 36–56 (LLYI…GLAV), 95–115 (LLGI…PFIE), and 131–151 (SVFL…CLPI).

This sequence belongs to the cytochrome b family. PetD subfamily. The 4 large subunits of the cytochrome b6-f complex are cytochrome b6, subunit IV (17 kDa polypeptide, PetD), cytochrome f and the Rieske protein, while the 4 small subunits are PetG, PetL, PetM and PetN. The complex functions as a dimer.

The protein resides in the cellular thylakoid membrane. Its function is as follows. Component of the cytochrome b6-f complex, which mediates electron transfer between photosystem II (PSII) and photosystem I (PSI), cyclic electron flow around PSI, and state transitions. The sequence is that of Cytochrome b6-f complex subunit 4 from Prochlorococcus marinus subsp. pastoris (strain CCMP1986 / NIES-2087 / MED4).